A 112-amino-acid polypeptide reads, in one-letter code: Large ribosomal subunit protein uL1 (112 aa).

It belongs to the universal ribosomal protein uL1 family.

The chain is Large ribosomal subunit protein uL1 (rpl-10a) from Caenorhabditis remanei (Caenorhabditis vulgaris).